Consider the following 2273-residue polypeptide: MGFVRQIQLLLWKNWTLRKRQKIRFVVELVWPLSLFLVLIWLRNANPLYSHHECHFPNKAMPSAGMLPWLQGIFCNVNNPCFQSPTPGESPGIVSNYNNSILARVYRDFQELLMNAPESQHLGRIWTELHILSQFMDTLRTHPERIAGRGIRIRDILKDEETLTLFLIKNIGLSDSVVYLLINSQVRPEQFAHGVPDLALKDIACSEALLERFIIFSQRRGAKTVRYALCSLSQGTLQWIEDTLYANVDFFKLFRVLPTLLDSRSQGINLRSWGGILSDMSPRIQEFIHRPSMQDLLWVTRPLMQNGGPETFTKLMGILSDLLCGYPEGGGSRVLSFNWYEDNNYKAFLGIDSTRKDPIYSYDRRTTSFCNALIQSLESNPLTKIAWRAAKPLLMGKILYTPDSPAARRILKNANSTFEELEHVRKLVKAWEEVGPQIWYFFDNSTQMNMIRDTLGNPTVKDFLNRQLGEEGITAEAILNFLYKGPRESQADDMANFDWRDIFNITDRTLRLVNQYLECLVLDKFESYNDETQLTQRALSLLEENMFWAGVVFPDMYPWTSSLPPHVKYKIRMDIDVVEKTNKIKDRYWDSGPRADPVEDFRYIWGGFAYLQDMVEQGITRSQVQAEAPVGIYLQQMPYPCFVDDSFMIILNRCFPIFMVLAWIYSVSMTVKSIVLEKELRLKETLKNQGVSNAVIWCTWFLDSFSIMSMSIFLLTIFIMHGRILHYSDPFILFLFLLAFSTATIMLCFLLSTFFSKASLAAACSGVIYFTLYLPHILCFAWQDRMTAELKKAVSLLSPVAFGFGTEYLVRFEEQGLGLQWSNIGNSPTEGDEFSFLLSMQMMLLDAAVYGLLAWYLDQVFPGDYGTPLPWYFLLQESYWLGGEGCSTREERALEKTEPLTEETEDPEHPEGIHDSFFEREHPGWVPGVCVKNLVKIFEPCGRPAVDRLNITFYENQITAFLGHNGAGKTTTLSILTGLLPPTSGTVLVGGRDIETSLDAVRQSLGMCPQHNILFHHLTVAEHMLFYAQLKGKSQEEAQLEMEAMLEDTGLHHKRNEEAQDLSGGMQRKLSVAIAFVGDAKVVILDEPTSGVDPYSRRSIWDLLLKYRSGRTIIMSTHHMDEADLLGDRIAIIAQGRLYCSGTPLFLKNCFGTGLYLTLVRKMKNIQSQRKGSEGTCSCSSKGFSTTCPAHVDDLTPEQVLDGDVNELMDVVLHHVPEAKLVECIGQELIFLLPNKNFKHRAYASLFRELEETLADLGLSSFGISDTPLEEIFLKVTEDSDSGPLFAGGAQQKRENVNPRHPCLGPREKAGQTPQDSNVCSPGAPAAHPEGQPPPEPECPGPQLNTGTQLVLQHVQALLVKRFQHTIRSHKDFLAQIVLPATFVFLALMLSIVIPPFGEYPALTLHPWIYGQQYTFFSMDEPGSEQFTVLADVLLNKPGFGNRCLKEGWLPEYPCGNSTPWKTPSVSPNITQLFQKQKWTQVNPSPSCRCSTREKLTMLPECPEGAGGLPPPQRTQRSTEILQDLTDRNISDFLVKTYPALIRSSLKSKFWVNEQRYGGISIGGKLPVVPITGEALVGFLSDLGRIMNVSGGPITREASKEIPDFLKHLETEDNIKVWFNNKGWHALVSFLNVAHNAILRASLPKDRSPEEYGITVISQPLNLTKEQLSEITVLTTSVDAVVAICVIFSMSFVPASFVLYLIQERVNKSKHLQFISGVSPTTYWVTNFLWDIMNYSVSAGLVVGIFIGFQKKAYTSPENLPALVALLLLYGWAVIPMMYPASFLFDVPSTAYVALSCANLFIGINSSAITFILELFENNRTLLRFNAVLRKLLIVFPHFCLGRGLIDLALSQAVTDVYARFGEEHSANPFHWDLIGKNLFAMVVEGVVYFLLTLLVQRHFFLSQWIAEPTKEPIVDEDDDVAEERQRIITGGNKTDILRLHELTKIYPGTSSPAVDRLCVGVRPGECFGLLGVNGAGKTTTFKMLTGDTTVTSGDATVAGKSILTNISEVHQNMGYCPQFDAIDELLTGREHLYLYARLRGVPAEEIEKVANWSIKSLGLTVYADCLAGTYSGGNKRKLSTAIALIGCPPLVLLDEPTTGMDPQARRMLWNVIVSIIREGRAVVLTSHSMEECEALCTRLAIMVKGAFRCMGTIQHLKSKFGDGYIVTMKIKSPKDDLLPDLNPVEQFFQGNFPGSVQRERHYNMLQFQVSSSSLARIFQLLLSHKDSLLIEEYSVTQTTLDQVFVNFAKQQTESHDLPLHPRAAGASRQAQD.

Over 1 to 21 the chain is Cytoplasmic; the sequence is MGFVRQIQLLLWKNWTLRKRQ. A helical transmembrane segment spans residues 22 to 42; that stretch reads KIRFVVELVWPLSLFLVLIWL. The Extracellular portion of the chain corresponds to 43–646; the sequence is RNANPLYSHH…MPYPCFVDDS (604 aa). 2 cysteine pairs are disulfide-bonded: cysteine 54/cysteine 81 and cysteine 75/cysteine 324. Asparagine 98 carries an N-linked (GlcNAc...) asparagine glycan. Mg(2+) contacts are provided by serine 336 and asparagine 338. The cysteines at positions 370 and 519 are disulfide-linked. 3 N-linked (GlcNAc...) asparagine glycosylation sites follow: asparagine 415, asparagine 444, and asparagine 504. An N-all-trans-retinylidenephosphatidylethanolamine contacts are provided by arginine 587 and arginine 653. 3 disulfides stabilise this stretch: cysteine 641–cysteine 1490, cysteine 1444–cysteine 1455, and cysteine 1488–cysteine 1502. The helical transmembrane segment at 647–667 threads the bilayer; the sequence is FMIILNRCFPIFMVLAWIYSV. Residues 668-699 lie on the Cytoplasmic side of the membrane; the sequence is SMTVKSIVLEKELRLKETLKNQGVSNAVIWCT. The helical transmembrane segment at 700-720 threads the bilayer; that stretch reads WFLDSFSIMSMSIFLLTIFIM. The Extracellular portion of the chain corresponds to 721 to 730; the sequence is HGRILHYSDP. Residues 731–751 form a helical membrane-spanning segment; it reads FILFLFLLAFSTATIMLCFLL. Topologically, residues 752 to 759 are cytoplasmic; it reads STFFSKAS. The helical transmembrane segment at 760-780 threads the bilayer; that stretch reads LAAACSGVIYFTLYLPHILCF. Residues 781–835 are Extracellular-facing; it reads AWQDRMTAELKKAVSLLSPVAFGFGTEYLVRFEEQGLGLQWSNIGNSPTEGDEFS. A helical membrane pass occupies residues 836 to 856; sequence FLLSMQMMLLDAAVYGLLAWY. The Cytoplasmic segment spans residues 857 to 1376; the sequence is LDQVFPGDYG…IRSHKDFLAQ (520 aa). Positions 891 to 911 are disordered; it reads ERALEKTEPLTEETEDPEHPE. Threonine 901 bears the Phosphothreonine mark. Residues 929–1160 enclose the ABC transporter 1 domain; the sequence is VCVKNLVKIF…FGTGLYLTLV (232 aa). Positions 938, 966, and 969 each coordinate ATP. Residue threonine 970 coordinates Mg(2+). ATP-binding residues include threonine 971, glutamine 1010, lysine 1054, glycine 1064, glycine 1065, and histidine 1118. Serine 1185 carries the post-translational modification Phosphoserine. The interval 1284-1345 is disordered; that stretch reads PLFAGGAQQK…EPECPGPQLN (62 aa). Phosphothreonine is present on threonine 1313. Serine 1317 carries the post-translational modification Phosphoserine. Pro residues predominate over residues 1331 to 1340; the sequence is GQPPPEPECP. A helical transmembrane segment spans residues 1377 to 1397; sequence IVLPATFVFLALMLSIVIPPF. The Extracellular segment spans residues 1398 to 1727; it reads GEYPALTLHP…VSPTTYWVTN (330 aa). Asparagine 1469 carries an N-linked (GlcNAc...) asparagine glycan. 3 N-linked (GlcNAc...) asparagine glycosylation sites follow: asparagine 1529, asparagine 1588, and asparagine 1662. Residues 1728–1748 traverse the membrane as a helical segment; sequence FLWDIMNYSVSAGLVVGIFIG. The Cytoplasmic portion of the chain corresponds to 1749–1759; the sequence is FQKKAYTSPEN. The helical transmembrane segment at 1760–1780 threads the bilayer; that stretch reads LPALVALLLLYGWAVIPMMYP. The Extracellular portion of the chain corresponds to 1781 to 1792; the sequence is ASFLFDVPSTAY. The helical transmembrane segment at 1793–1813 threads the bilayer; sequence VALSCANLFIGINSSAITFIL. Topologically, residues 1814–1831 are cytoplasmic; that stretch reads ELFENNRTLLRFNAVLRK. Residues 1832-1852 traverse the membrane as a helical segment; that stretch reads LLIVFPHFCLGRGLIDLALSQ. Topologically, residues 1853 to 1873 are extracellular; that stretch reads AVTDVYARFGEEHSANPFHWD. Residues 1874 to 1894 traverse the membrane as a helical segment; sequence LIGKNLFAMVVEGVVYFLLTL. Over 1895–2273 the chain is Cytoplasmic; sequence LVQRHFFLSQ…AAGASRQAQD (379 aa). One can recognise an ABC transporter 2 domain in the interval 1938-2170; that stretch reads LRLHELTKIY…FGDGYIVTMK (233 aa). Asparagine 1974, glycine 1975, lysine 1978, threonine 1979, threonine 1980, and glycine 2073 together coordinate ATP. Threonine 1979 contacts Mg(2+). The tract at residues 2244–2249 is essential for ATP binding and ATPase activity; the sequence is VFVNFA.

This sequence belongs to the ABC transporter superfamily. ABCA family. Proteolytic cleavage by trypsin leads to a 120-kDa N-terminal fragment and a 115-kDa C-terminal fragment that are linked through disulfide bonds. Post-translationally, N-glycosylated. In terms of processing, phosphorylation is independent of light exposure and modulates ATPase activity. As to expression, retinal-specific. Seems to be exclusively found in the rims of rod photoreceptor cells.

It localises to the membrane. The protein localises to the endoplasmic reticulum. It is found in the cytoplasmic vesicle. The protein resides in the cell projection. Its subcellular location is the cilium. It localises to the photoreceptor outer segment. The catalysed reaction is an N-all-trans-retinylidenephosphatidylethanolamine(out) + ATP + H2O = an N-all-trans-retinylidenephosphatidylethanolamine(in) + ADP + phosphate + H(+). It catalyses the reaction ATP + H2O + phospholipidSide 1 = ADP + phosphate + phospholipidSide 2.. It carries out the reaction a 1,2-diacyl-sn-glycero-3-phosphoethanolamine(out) + ATP + H2O = a 1,2-diacyl-sn-glycero-3-phosphoethanolamine(in) + ADP + phosphate + H(+). The enzyme catalyses N-11-cis-retinylidenephosphatidylethanolamine(out) + ATP + H2O = N-11-cis-retinylidenephosphatidylethanolamine(in) + ADP + phosphate + H(+). The catalysed reaction is ATP + H2O = ADP + phosphate + H(+). ATPase activity is decreased by cholesterol and ceramide. Phospholipids translocase activity is highly reduced by berylium fluoride and aluminum floride. N-ethylmaleimide inhibits phospholipid translocase activity. Functionally, flippase that catalyzes in an ATP-dependent manner the transport of retinal-phosphatidylethanolamine conjugates like 11-cis and all-trans isomers of N-retinylidene-phosphatidylethanolamine (N-Ret-PE) from the lumen to the cytoplasmic leaflet of photoreceptor outer segment disk membranes, where 11-cis-retinylidene-phosphatidylethanolamine is then isomerized to its all-trans isomer and reduced by RDH8 to produce all-trans-retinol. This transport activity ensures that all-trans-retinal generated from photoexcitation and 11-cis-retinal not needed for the regeneration of rhodopsin and cone opsins are effectively cleared from the photoreceptors, therefore preventing their accumulation and the formation of toxic bisretinoid. Displays ATPase activity in vitro in absence of retinal substrate. May display GTPase activity that is strongly influenced by the lipid environment and the presence of retinoid compounds. Binds the unprotonated form of N-retinylidene-phosphatidylethanolamine with high affinity in the absence of ATP, and ATP binding and hydrolysis induce a protein conformational change that causes N-retinylidene-phosphatidylethanolamine release. The protein is Retinal-specific phospholipid-transporting ATPase ABCA4 of Homo sapiens (Human).